The primary structure comprises 356 residues: Phosphoribosyl pyrophosphate synthase-associated protein 1 (356 aa).

An N-acetylmethionine modification is found at methionine 1. A phosphoserine mark is found at serine 177 and serine 215.

Belongs to the ribose-phosphate pyrophosphokinase family. In terms of assembly, binds to PRPS1 and PRPS2.

Functionally, seems to play a negative regulatory role in 5-phosphoribose 1-diphosphate synthesis. The polypeptide is Phosphoribosyl pyrophosphate synthase-associated protein 1 (PRPSAP1) (Bos taurus (Bovine)).